A 683-amino-acid chain; its full sequence is Bifunctional lysine-specific demethylase and histidyl-hydroxylase NO66 (683 aa).

Positions 1-26 (MHKASTSSANRANFQGNHKTQKSPNN) are enriched in polar residues. Disordered stretches follow at residues 1–162 (MHKA…SPIQ) and 179–208 (AAGA…AAKS). Over residues 54–65 (LTKEQKERRKMM) the composition is skewed to basic and acidic residues. Positions 85–94 (IDTSASTSNK) are enriched in polar residues. Residues 95–108 (GKSKAARPTDRKRR) are compositionally biased toward basic residues. The span at 116 to 125 (PADANNNNTK) shows a compositional bias: low complexity. S152 is modified (phosphoserine). Position 158 is a phosphothreonine (T158). Position 159 is a phosphoserine (S159). Over residues 179–189 (AAGASGASGPA) the composition is skewed to low complexity. The region spanning 341-480 (NPSTYLVGLR…NLLEKLMPIV (140 aa)) is the JmjC domain. H381, D383, and H446 together coordinate Fe cation.

Belongs to the ROX family. NO66 subfamily. The cofactor is Fe(2+).

The protein localises to the nucleus. The catalysed reaction is N(6),N(6)-dimethyl-L-lysyl(36)-[histone H3] + 2 2-oxoglutarate + 2 O2 = L-lysyl(36)-[histone H3] + 2 formaldehyde + 2 succinate + 2 CO2. Oxygenase that can act as both a histone lysine demethylase and a ribosomal histidine hydroxylase. Specifically demethylates 'Lys-4' (H3K4me) and 'Lys-36' (H3K36me) of histone H3, thereby playing a central role in histone code. The polypeptide is Bifunctional lysine-specific demethylase and histidyl-hydroxylase NO66 (Drosophila yakuba (Fruit fly)).